Consider the following 247-residue polypeptide: 23S rRNA (guanosine-2'-O-)-methyltransferase RlmB (247 aa).

The S-adenosyl-L-methionine site is built by glycine 197, isoleucine 217, and leucine 226.

This sequence belongs to the class IV-like SAM-binding methyltransferase superfamily. RNA methyltransferase TrmH family. RlmB subfamily.

The protein resides in the cytoplasm. It catalyses the reaction guanosine(2251) in 23S rRNA + S-adenosyl-L-methionine = 2'-O-methylguanosine(2251) in 23S rRNA + S-adenosyl-L-homocysteine + H(+). Specifically methylates the ribose of guanosine 2251 in 23S rRNA. This is 23S rRNA (guanosine-2'-O-)-methyltransferase RlmB from Vibrio parahaemolyticus serotype O3:K6 (strain RIMD 2210633).